An 868-amino-acid polypeptide reads, in one-letter code: Ionotropic receptor 93a (868 aa).

A signal peptide spans 1–28 (MNPGEMRPSACLLLLAGLQLSILVPTEA). Over 29-565 (NDFSSFLSAN…ITRKPDEVSR (537 aa)) the chain is Extracellular. N-linked (GlcNAc...) asparagine glycosylation is found at asparagine 38, asparagine 205, asparagine 294, asparagine 305, asparagine 432, asparagine 475, asparagine 499, and asparagine 543. A helical membrane pass occupies residues 566–586 (IYLFTAPFTVETWFCLMGIIL). Residues 587–642 (LTAPTLYAINRLAPLKEMRIVGLSTVKSCFWYIFGALLQQGGMYLPTADSGRLVVG) lie on the Cytoplasmic side of the membrane. The helical transmembrane segment at 643–663 (FWWIVVIVLVTTYCGNLVAFL) threads the bilayer. Over 664–832 (TFPKFQPGVD…HKVNMDDMQG (169 aa)) the chain is Extracellular. Asparagine 691 carries N-linked (GlcNAc...) asparagine glycosylation. Residues 833-853 (CFLVLLLGFTLALLIVCGEFW) form a helical membrane-spanning segment. Over 854–868 (YRRFRASRKRRQFTN) the chain is Cytoplasmic.

Belongs to the glutamate-gated ion channel (TC 1.A.10.1) family. In terms of tissue distribution, in the antenna, detected in sacculus neurons which innervate the first and second chambers (at protein level). Expressed in multiple cells of the larval dorsal organ ganglion, including the dorsal organ cool cells where it is predominately localized to the dendritic bulbs (at protein level).

Its subcellular location is the cell membrane. Its function is as follows. Integral part of various neural sensory systems in the antenna that provide the neural basis for the response to environmental changes in temperature (thermosensation) and humidity (hygrosensation). Together with Ir21a and Ir25a, mediates the response of the larval dorsal organ cool cells, a trio of cool-responsive neurons, to cooling and is required for cool avoidance behavior. Together with Ir25a and Ir40a, mediates the response of the hydrosensory sacculus neurons to changes in relative humidity, and is required for dry detection and humidiy preference behavior. This is Ionotropic receptor 93a from Drosophila melanogaster (Fruit fly).